The following is a 178-amino-acid chain: Transcription termination/antitermination protein NusG (178 aa).

The 31-residue stretch at 126-156 folds into the KOW domain; it reads VGQQVRVNEGPFADFNGVVEEVNYERNKLRV.

Belongs to the NusG family.

Functionally, participates in transcription elongation, termination and antitermination. This Neisseria meningitidis serogroup B (strain ATCC BAA-335 / MC58) protein is Transcription termination/antitermination protein NusG.